A 467-amino-acid polypeptide reads, in one-letter code: Cysteine--tRNA ligase (467 aa).

Cys27 is a Zn(2+) binding site. A 'HIGH' region motif is present at residues 29–39; the sequence is PTVYNYIHIGN. The Zn(2+) site is built by Cys207, His232, and Glu236. Residues 264 to 268 carry the 'KMSKS' region motif; that stretch reads KMSKS. Lys267 lines the ATP pocket.

This sequence belongs to the class-I aminoacyl-tRNA synthetase family. Monomer. Zn(2+) serves as cofactor.

The protein localises to the cytoplasm. The enzyme catalyses tRNA(Cys) + L-cysteine + ATP = L-cysteinyl-tRNA(Cys) + AMP + diphosphate. The polypeptide is Cysteine--tRNA ligase (Caldanaerobacter subterraneus subsp. tengcongensis (strain DSM 15242 / JCM 11007 / NBRC 100824 / MB4) (Thermoanaerobacter tengcongensis)).